The sequence spans 366 residues: DNA replication and repair protein RecF (366 aa).

30–37 (GRNAQGKT) contributes to the ATP binding site.

Belongs to the RecF family.

It is found in the cytoplasm. Functionally, the RecF protein is involved in DNA metabolism; it is required for DNA replication and normal SOS inducibility. RecF binds preferentially to single-stranded, linear DNA. It also seems to bind ATP. The protein is DNA replication and repair protein RecF of Streptococcus thermophilus (strain CNRZ 1066).